We begin with the raw amino-acid sequence, 139 residues long: Putative pre-16S rRNA nuclease (139 aa).

It belongs to the YqgF nuclease family.

It is found in the cytoplasm. Could be a nuclease involved in processing of the 5'-end of pre-16S rRNA. The sequence is that of Putative pre-16S rRNA nuclease from Phocaeicola vulgatus (strain ATCC 8482 / DSM 1447 / JCM 5826 / CCUG 4940 / NBRC 14291 / NCTC 11154) (Bacteroides vulgatus).